We begin with the raw amino-acid sequence, 270 residues long: NAD kinase (270 aa).

Aspartate 63 (proton acceptor) is an active-site residue. NAD(+)-binding positions include 63-64 (DG), 131-132 (NE), lysine 142, arginine 159, aspartate 161, 172-177 (TAYAMS), alanine 196, and glutamine 230.

This sequence belongs to the NAD kinase family. A divalent metal cation serves as cofactor.

Its subcellular location is the cytoplasm. It carries out the reaction NAD(+) + ATP = ADP + NADP(+) + H(+). In terms of biological role, involved in the regulation of the intracellular balance of NAD and NADP, and is a key enzyme in the biosynthesis of NADP. Catalyzes specifically the phosphorylation on 2'-hydroxyl of the adenosine moiety of NAD to yield NADP. The protein is NAD kinase of Methanoculleus marisnigri (strain ATCC 35101 / DSM 1498 / JR1).